Here is a 663-residue protein sequence, read N- to C-terminus: Rap1 GTPase-activating protein 1 (663 aa).

Residues 1 to 17 enclose the GoLoco domain; that stretch reads MIEKMQGSRMDEQRCSF. Residues 1 to 23 are disordered; the sequence is MIEKMQGSRMDEQRCSFPPPLKT. Phenylalanine 17 bears the Phosphoserine mark. Residues 181 to 397 form the Rap-GAP domain; it reads IVTFDEHVIS…RTRAALLETL (217 aa). Serine 441 carries the post-translational modification Phosphoserine. Disordered stretches follow at residues 442–604 and 616–645; these read MDAM…PHKR and SVSTTSGGSSPGPSRSPHPDAGKLGDPACP. The segment covering 450–465 has biased composition (polar residues); it reads KKPNTVSTSHSGSFAP. Residues serine 484, serine 499, serine 515, serine 541, and serine 542 each carry the phosphoserine modification. A compositionally biased stretch (polar residues) spans 535 to 549; sequence ENSSTQSSPEMPTTK. Positions 567–579 are enriched in low complexity; it reads RSSSSASSFASVV. Residues 580 to 591 show a composition bias toward acidic residues; that stretch reads EETEGVDGEDTG. The segment covering 616-630 has biased composition (low complexity); the sequence is SVSTTSGGSSPGPSR.

In terms of assembly, homodimer and heterodimer with RAP1B. In terms of tissue distribution, significant expression seen in the brain, kidney and pancreas. Abundant in the cerebral cortex and expressed at much lower levels in the spinal cord. Not detected in the lymphoid tissues.

Its subcellular location is the golgi apparatus membrane. Functionally, GTPase activator for the nuclear Ras-related regulatory protein RAP-1A (KREV-1), converting it to the putatively inactive GDP-bound state. This Homo sapiens (Human) protein is Rap1 GTPase-activating protein 1 (RAP1GAP).